The primary structure comprises 415 residues: Probable G-protein coupled receptor 19 (415 aa).

The Extracellular portion of the chain corresponds to 1 to 69 (MVFAHRMDND…LNPGEVATAS (69 aa)). Residues asparagine 25 and asparagine 52 are each glycosylated (N-linked (GlcNAc...) asparagine). Residues 70 to 90 (IFFGALWLFSIFGNSLVCLVI) traverse the membrane as a helical segment. The Cytoplasmic segment spans residues 91–102 (HRSRRTQSTTNY). The chain crosses the membrane as a helical span at residues 103–123 (FVVSMACADLLISVASTPFVV). Topologically, residues 124 to 152 (LQFTTGRWTLGSAMCKVVRYFQYLTPGVQ) are extracellular. A disulfide bridge connects residues cysteine 138 and cysteine 210. The helical transmembrane segment at 153–173 (IYVLLSICIDRFYTIVYPLSF) threads the bilayer. Residues 174 to 182 (KVSREKAKK) are Cytoplasmic-facing. The helical transmembrane segment at 183–203 (MIAASWILDAAFVTPVFFFYG) threads the bilayer. At 204 to 221 (SNWDSHCNYFLPPSWEGT) the chain is on the extracellular side. Residues 222–242 (AYTVIHFLVGFVIPSILIILF) traverse the membrane as a helical segment. Topologically, residues 243-277 (YQKVIKYIWRIGTDGRTLRRTMNIVPRTKVKTVKM) are cytoplasmic. A helical membrane pass occupies residues 278-298 (FLLLNLVFLFSWLPFHVAQLW). The Extracellular segment spans residues 299–309 (HPHEQDYKKSS). A helical membrane pass occupies residues 310 to 332 (LVFTAVTWVSFSSSASKPTLYSI). Residues 333–415 (YNANFRRGMK…INSNPPNTFV (83 aa)) are Cytoplasmic-facing.

This sequence belongs to the G-protein coupled receptor 1 family. In terms of tissue distribution, strongly expressed in the brain.

Its subcellular location is the cell membrane. G-protein coupled receptor that plays a role in the regulation of circadian rhythms and energy metabolism. Participates in maintaining proper circadian gene expression in the suprachiasmatic nucleus (SCN), the locus of the master circadian clock in the brain. May function as a coordinator of aging-associated metabolic dysfunction, stress response, DNA integrity management, and eventual senescence. Upon binding to adropin, modulates mitochondrial energy metabolism via the p44/42-PDK4 signaling pathway, influencing pyruvate dehydrogenase activity. The polypeptide is Probable G-protein coupled receptor 19 (Gpr19) (Mus musculus (Mouse)).